Reading from the N-terminus, the 431-residue chain is tRNA (adenine(37)-N6)-methyltransferase (431 aa).

The TsaA-like domain occupies 30-168 (TEPIGYLESC…YIADYDSPQN (139 aa)). Residues 47 to 49 (PRQ), 90 to 91 (HK), arginine 117, leucine 127, and 148 to 151 (IDGT) each bind S-adenosyl-L-methionine. The segment at 196–242 (LSGRGKVQPRQSTKERPKCLEDRTSGENSQKSRDMSEIQHTLPEDRE) is disordered. Residues 207 to 242 (STKERPKCLEDRTSGENSQKSRDMSEIQHTLPEDRE) are compositionally biased toward basic and acidic residues.

It belongs to the tRNA methyltransferase O family.

It carries out the reaction N(6)-L-threonylcarbamoyladenosine(37) in tRNA + S-adenosyl-L-methionine = N(6)-methyl,N(6)-L-threonylcarbamoyladenosine(37) in tRNA + S-adenosyl-L-homocysteine + H(+). In terms of biological role, S-adenosyl-L-methionine-dependent methyltransferase responsible for the addition of the methyl group in the formation of N6-methyl-N6-threonylcarbamoyladenosine at position 37 (m(6)t(6)A37) of the tRNA anticodon loop of tRNA(Ser)(GCU). The methyl group of m(6)t(6)A37 may improve the efficiency of the tRNA decoding ability. May bind to tRNA. The sequence is that of tRNA (adenine(37)-N6)-methyltransferase from Mus musculus (Mouse).